The chain runs to 228 residues: Homeobox protein Hox-B6a (228 aa).

The short motif at 132–137 (VYPWMQ) is the Antp-type hexapeptide element. A DNA-binding region (homeobox) is located at residues 150–209 (GRRGRQTYTRYQTLELEKEFHFNRYLTRRRRIEIAHALCLTERQIKIWFQNRRMKWKKEN).

Belongs to the Antp homeobox family.

Its subcellular location is the nucleus. Its function is as follows. Sequence-specific transcription factor which is part of a developmental regulatory system that provides cells with specific positional identities on the anterior-posterior axis. This Danio rerio (Zebrafish) protein is Homeobox protein Hox-B6a (hoxb6a).